The sequence spans 513 residues: Light-independent protochlorophyllide reductase subunit B (513 aa).

Aspartate 36 contacts [4Fe-4S] cluster. Aspartate 299 serves as the catalytic Proton donor. Position 434–435 (glycine 434–methionine 435) interacts with substrate.

This sequence belongs to the ChlB/BchB/BchZ family. As to quaternary structure, protochlorophyllide reductase is composed of three subunits; ChlL, ChlN and ChlB. Forms a heterotetramer of two ChlB and two ChlN subunits. [4Fe-4S] cluster serves as cofactor.

The protein localises to the plastid. It is found in the chloroplast. The catalysed reaction is chlorophyllide a + oxidized 2[4Fe-4S]-[ferredoxin] + 2 ADP + 2 phosphate = protochlorophyllide a + reduced 2[4Fe-4S]-[ferredoxin] + 2 ATP + 2 H2O. It participates in porphyrin-containing compound metabolism; chlorophyll biosynthesis (light-independent). In terms of biological role, component of the dark-operative protochlorophyllide reductase (DPOR) that uses Mg-ATP and reduced ferredoxin to reduce ring D of protochlorophyllide (Pchlide) to form chlorophyllide a (Chlide). This reaction is light-independent. The NB-protein (ChlN-ChlB) is the catalytic component of the complex. This Cycas taitungensis (Prince sago) protein is Light-independent protochlorophyllide reductase subunit B.